The primary structure comprises 571 residues: Decapping 5-like protein (571 aa).

The segment covering 1 to 17 (MASESSQSSSPSSSQPP) has biased composition (low complexity). 4 disordered regions span residues 1–27 (MASE…SPGN), 102–141 (LQVN…ISGY), 159–187 (LSSK…GSLT), and 258–305 (SQVV…SEAQ). The Sm domain maps to 25-108 (PGNNVGDTFI…IKDLQVNPSP (84 aa)). Composition is skewed to polar residues over residues 104–138 (VNPS…SSPI) and 167–187 (TQHS…GSLT). The span at 264–279 (SPDVSSNQSYSSNPSP) shows a compositional bias: low complexity. Residues 293-305 (SVSSNLSPPSEAQ) show a composition bias toward polar residues. In terms of domain architecture, DFDF spans 419-455 (RIPSSSIEYTEEFDFEAMNEKFKKSELWGYLGRNNQR). Positions 474–489 (PAYNKDDFFDTISCNQ) match the FFD box motif. The TFG box motif lies at 498–518 (QQHNQFPEHMRQVPEAFGNNF).

It belongs to the LSM14 family. As to quaternary structure, homodimer. Component of the decapping complex.

The protein resides in the cytoplasm. The protein localises to the P-body. In terms of biological role, as a component of the decapping complex, involved in the degradation of mRNAs. Promotes P-body formation. Translational repressor. This Arabidopsis thaliana (Mouse-ear cress) protein is Decapping 5-like protein (DCP5-L).